The sequence spans 447 residues: MSVNLSKNGAALQGAYKDVLDEKTKTDWALYTYEGNSNDIRLAETGDGGLEELVEELSSGKVMYAFCRVKDPNSGLPKFVLVNWTGEGVKDARKGACANHVSTMANFLKGAHVTINARAEEDVEPESIMEKVAKASGANYNFHKESKRGNEGPQGPVGSVYQKTNAMSEIKRVGKENFWAKAEKDEEERRMEENRRANSEKDRLERERKEREQREAETREQRFRERAKEIDAQRKEQEETEKQQTVPASQRSVNPRETFLQKERSLPESGPVSAQPGRLRSPFLQKSACQPESSPPPSPVHRVQEPPSPPVYPAHQTPPESPVPPVSHPPESTVHVKEQCTASQQEEENIYQDATEDQNIYEDTTENQNIYEDTPQEEPVYEIEVEEEKGVCARALYDYQAADDTEISFDPDDLITQIQFIDEGWWRGFSPAGHFGMFPANYVELLE.

Positions 2–133 (SVNLSKNGAA…EPESIMEKVA (132 aa)) constitute an ADF-H domain. Disordered regions lie at residues 141–160 (NFHK…VGSV) and 184–368 (KDEE…TENQ). The stretch at 180 to 245 (AKAEKDEEER…EQEETEKQQT (66 aa)) forms a coiled coil. Basic and acidic residues predominate over residues 184–242 (KDEEERRMEENRRANSEKDRLERERKEREQREAETREQRFRERAKEIDAQRKEQEETEK). Polar residues predominate over residues 246–255 (VPASQRSVNP). The segment covering 319-328 (PESPVPPVSH) has biased composition (pro residues). Residues 345–365 (QEEENIYQDATEDQNIYEDTT) are compositionally biased toward acidic residues. The region spanning 388–447 (EKGVCARALYDYQAADDTEISFDPDDLITQIQFIDEGWWRGFSPAGHFGMFPANYVELLE) is the SH3 domain.

It belongs to the ABP1 family.

It is found in the cytoplasm. The protein resides in the cytoskeleton. It localises to the cell projection. Its subcellular location is the lamellipodium. The protein localises to the ruffle. It is found in the cell cortex. The protein resides in the cytosol. It localises to the synapse. Its subcellular location is the perikaryon. The protein localises to the neuron projection. It is found in the cell membrane. The protein resides in the cytoplasmic vesicle. It localises to the clathrin-coated vesicle membrane. Its subcellular location is the golgi apparatus membrane. The protein localises to the podosome. It is found in the early endosome. The protein resides in the dendrite. It localises to the postsynaptic density. Adapter protein that binds F-actin and dynamin, and thereby plays a role in receptor-mediated endocytosis. Plays a role in the reorganization of the actin cytoskeleton, formation of cell projections, such as neurites, in neuron morphogenesis and synapse formation. Does not bind G-actin and promote actin polymerization by itself, but excerts its functions by interaction with other proteins. Required for the formation of organized podosome rosettes. The sequence is that of Drebrin-like protein A (dbnl-a) from Xenopus laevis (African clawed frog).